The following is a 632-amino-acid chain: tRNA uridine 5-carboxymethylaminomethyl modification enzyme MnmG (632 aa).

Position 13-18 (13-18 (GGGHAG)) interacts with FAD. Position 273-287 (273-287 (GPRYCPSIEDKIHRF)) interacts with NAD(+).

The protein belongs to the MnmG family. In terms of assembly, homodimer. Heterotetramer of two MnmE and two MnmG subunits. FAD is required as a cofactor.

It is found in the cytoplasm. NAD-binding protein involved in the addition of a carboxymethylaminomethyl (cmnm) group at the wobble position (U34) of certain tRNAs, forming tRNA-cmnm(5)s(2)U34. The protein is tRNA uridine 5-carboxymethylaminomethyl modification enzyme MnmG of Psychrobacter arcticus (strain DSM 17307 / VKM B-2377 / 273-4).